Here is a 155-residue protein sequence, read N- to C-terminus: RNA pyrophosphohydrolase (155 aa).

The 143-residue stretch at 6–148 folds into the Nudix hydrolase domain; sequence GYRANVAIVL…KQDVYRRALT (143 aa). A Nudix box motif is present at residues 38-59; the sequence is GGVATGETPLQAMYRELYEEVG.

Belongs to the Nudix hydrolase family. RppH subfamily. A divalent metal cation serves as cofactor.

In terms of biological role, accelerates the degradation of transcripts by removing pyrophosphate from the 5'-end of triphosphorylated RNA, leading to a more labile monophosphorylated state that can stimulate subsequent ribonuclease cleavage. This chain is RNA pyrophosphohydrolase, found in Francisella philomiragia subsp. philomiragia (strain ATCC 25017 / CCUG 19701 / FSC 153 / O#319-036).